The sequence spans 156 residues: Rhombotin-1 (156 aa).

LIM zinc-binding domains lie at 22 to 84 and 86 to 148; these read KGCA…LFGT and GNCA…GQLN.

Its subcellular location is the nucleus. Its function is as follows. May be involved in gene regulation within neural lineage cells potentially by direct DNA binding or by binding to other transcription factors. The polypeptide is Rhombotin-1 (Xenopus laevis (African clawed frog)).